The sequence spans 103 residues: PTS system lactose-specific EIIA component (103 aa).

The PTS EIIA type-3 domain maps to 1–102 (MNREEVQLLG…MKHLLEFYKR (102 aa)). Residue histidine 78 is the Tele-phosphohistidine intermediate of the active site. Histidine 78 is subject to Phosphohistidine; by HPr. Residue aspartate 81 participates in Mg(2+) binding.

As to quaternary structure, homotrimer. Mg(2+) serves as cofactor.

It is found in the cytoplasm. The phosphoenolpyruvate-dependent sugar phosphotransferase system (sugar PTS), a major carbohydrate active transport system, catalyzes the phosphorylation of incoming sugar substrates concomitantly with their translocation across the cell membrane. The enzyme II LacEF PTS system is involved in lactose transport. This Staphylococcus aureus (strain COL) protein is PTS system lactose-specific EIIA component.